Here is a 202-residue protein sequence, read N- to C-terminus: Pyridoxal 5'-phosphate synthase subunit PdxT (202 aa).

Residue 49-51 (GES) participates in L-glutamine binding. Residue cysteine 81 is the Nucleophile of the active site. Residues arginine 110 and 139-140 (IR) each bind L-glutamine. Residues histidine 182 and glutamate 184 each act as charge relay system in the active site.

This sequence belongs to the glutaminase PdxT/SNO family. As to quaternary structure, in the presence of PdxS, forms a dodecamer of heterodimers. Only shows activity in the heterodimer.

The enzyme catalyses aldehydo-D-ribose 5-phosphate + D-glyceraldehyde 3-phosphate + L-glutamine = pyridoxal 5'-phosphate + L-glutamate + phosphate + 3 H2O + H(+). It carries out the reaction L-glutamine + H2O = L-glutamate + NH4(+). Its pathway is cofactor biosynthesis; pyridoxal 5'-phosphate biosynthesis. Functionally, catalyzes the hydrolysis of glutamine to glutamate and ammonia as part of the biosynthesis of pyridoxal 5'-phosphate. The resulting ammonia molecule is channeled to the active site of PdxS. This Rhodococcus opacus (strain B4) protein is Pyridoxal 5'-phosphate synthase subunit PdxT.